A 96-amino-acid polypeptide reads, in one-letter code: CLAVATA3/ESR (CLE)-related protein 43 (96 aa).

A signal peptide spans 1 to 28 (MGCRDILLTFSVALLLISLFQIWLFREG). The tract at residues 71–96 (FGLNNTNSRFEDSNRRIPSSPDRLHN) is disordered. Residue asparagine 74 is glycosylated (N-linked (GlcNAc...) asparagine). A hydroxyproline mark is found at proline 88 and proline 91. O-linked (Ara...) hydroxyproline glycosylation is present at proline 91.

The protein belongs to the CLV3/ESR signal peptide family. The O-glycosylation (arabinosylation) of the hydroxyproline Pro-91 enhances binding affinity of the CLE43p peptide for its receptor. Expressed at low levels in seedlings.

Its subcellular location is the secreted. The protein resides in the extracellular space. Functionally, extracellular signal peptide that regulates cell fate. Promotes pollen tube growth prolongation in a SKM1 and SKM2-dependent manner, especially under relatively high temperature (at 30 degrees Celsius), thus conferring tolerance against high temperature probably through the maintenance of mitochondrial activity. This Arabidopsis thaliana (Mouse-ear cress) protein is CLAVATA3/ESR (CLE)-related protein 43.